Reading from the N-terminus, the 314-residue chain is Dihydroorotate dehydrogenase (fumarate) (314 aa).

Residues lysine 46, 70-74, and asparagine 130 each bind substrate; that span reads NSMGL. A Glycyl lysine isopeptide (Lys-Gly) (interchain with G-Cter in ubiquitin) cross-link involves residue lysine 46. 46–47 provides a ligand contact to FMN; that stretch reads KS. Asparagine 130 is an FMN binding site. The Nucleophile role is filled by cysteine 133. Residues lysine 167 and isoleucine 195 each coordinate FMN. 196-197 is a substrate binding site; it reads NS. FMN-binding positions include glycine 224, 252 to 253, and 274 to 275; these read GG and GT.

This sequence belongs to the dihydroorotate dehydrogenase family. Type 1 subfamily. As to quaternary structure, homodimer. FMN is required as a cofactor.

It localises to the cytoplasm. It catalyses the reaction (S)-dihydroorotate + fumarate = orotate + succinate. The protein operates within pyrimidine metabolism; UMP biosynthesis via de novo pathway. The activity is independent of the presence of oxygen. In terms of biological role, catalyzes the conversion of dihydroorotate to orotate with fumarate as the electron acceptor. Molecular oxygen can replace fumarate in vitro. Does not use oxaloacetate or NAD or NADP as electron acceptors. In Saccharomyces cerevisiae (strain ATCC 204508 / S288c) (Baker's yeast), this protein is Dihydroorotate dehydrogenase (fumarate) (URA1).